The sequence spans 606 residues: WD repeat-containing protein 1 (606 aa).

13 WD repeats span residues 4 to 45 (EIKK…LRNI), 48 to 87 (PAVA…IWDT), 93 to 135 (ILKY…LWDT), 138 to 176 (SVGE…FFEG), 180 to 218 (KFKF…IYDG), 224 to 263 (VCAL…IWDV), 270 to 306 (STFP…YLDK), 311 to 351 (KPLR…YWDS), 358 to 408 (SFSG…KLDV), 432 to 474 (LKDQ…VYSI), 480 to 518 (KDEG…VFSV), 523 to 561 (SENN…VWTL), and 566 to 604 (TKVK…EWTI). N6-acetyllysine occurs at positions 28, 81, 95, and 115. Tyr-238 carries the phosphotyrosine modification. Lys-480 bears the N6-acetyllysine mark.

The protein belongs to the WD repeat AIP1 family.

It is found in the cytoplasm. The protein resides in the cytoskeleton. It localises to the cell projection. Its subcellular location is the podosome. In terms of biological role, induces disassembly of actin filaments in conjunction with ADF/cofilin family proteins. Enhances cofilin-mediated actin severing. Involved in cytokinesis. Involved in chemotactic cell migration by restricting lamellipodial membrane protrusions. Involved in myocardium sarcomere organization. Required for cardiomyocyte growth and maintenance. Involved in megakaryocyte maturation and platelet shedding. Required for the establishment of planar cell polarity (PCP) during follicular epithelium development and for cell shape changes during PCP; the function seems to implicate cooperation with CFL1 and/or DSTN/ADF. Involved in the generation/maintenance of cortical tension. Involved in assembly and maintenance of epithelial apical cell junctions and plays a role in the organization of the perijunctional actomyosin belt. This Rattus norvegicus (Rat) protein is WD repeat-containing protein 1 (Wdr1).